A 155-amino-acid polypeptide reads, in one-letter code: Small ribosomal subunit protein uS7cz/uS7cy (155 aa).

Belongs to the universal ribosomal protein uS7 family. Part of the 30S ribosomal subunit.

Its subcellular location is the plastid. The protein resides in the chloroplast. Its function is as follows. One of the primary rRNA binding proteins, it binds directly to 16S rRNA where it nucleates assembly of the head domain of the 30S subunit. In Citrus sinensis (Sweet orange), this protein is Small ribosomal subunit protein uS7cz/uS7cy (rps7-A).